The following is a 262-amino-acid chain: Type III pantothenate kinase (262 aa).

9-16 is an ATP binding site; that stretch reads DAGNSRIK. Substrate-binding positions include Y96 and 103-106; that span reads GSDR. Residue D105 is the Proton acceptor of the active site. T129 is a binding site for ATP. A substrate-binding site is contributed by T189.

This sequence belongs to the type III pantothenate kinase family. In terms of assembly, homodimer. Requires NH4(+) as cofactor. K(+) serves as cofactor.

Its subcellular location is the cytoplasm. The enzyme catalyses (R)-pantothenate + ATP = (R)-4'-phosphopantothenate + ADP + H(+). It functions in the pathway cofactor biosynthesis; coenzyme A biosynthesis; CoA from (R)-pantothenate: step 1/5. Functionally, catalyzes the phosphorylation of pantothenate (Pan), the first step in CoA biosynthesis. This Burkholderia vietnamiensis (strain G4 / LMG 22486) (Burkholderia cepacia (strain R1808)) protein is Type III pantothenate kinase.